The primary structure comprises 397 residues: UDP-GlcNAc:betaGal beta-1,3-N-acetylglucosaminyltransferase 7 (397 aa).

Residues M1 to K6 lie on the Cytoplasmic side of the membrane. A helical membrane pass occupies residues T7–Q26. At R27–L397 the chain is on the lumenal side. Residues N84, N90, N210, and N387 are each glycosylated (N-linked (GlcNAc...) asparagine).

Belongs to the glycosyltransferase 31 family. In terms of tissue distribution, strongly expressed in placenta and colon. Moderately expressed in lung, stomach, small intestine and kidney. Very weakly expressed in cerebrum, cerebellum, heart and testis.

It localises to the golgi apparatus membrane. The protein operates within protein modification; protein glycosylation. Functionally, N-acetyl glucosamine (GlcNAc) transferase that catalyzes the transfer of GlcNAc via a beta1-&gt;3 linkage from UDP-GlcNAc to the non-reducing terminal galactose (Gal) in the linearly growing chain of N- and O-linked keratan sulfate proteoglycans. Cooperates with B4GALT4 galactosyltransferase and CHST6 and CHST1 sulfotransferases to construct and elongate mono- and disulfated disaccharide units [-&gt;3Galbeta1-&gt;4(6-sulfoGlcNAcbeta)1-&gt;] and [-&gt;3(6-sulfoGalbeta)1-&gt;4(6-sulfoGlcNAcbeta)1-&gt;] within keratan sulfate polymer. Involved in biosynthesis of N-linked keratan sulfate proteoglycans in cornea, with an impact on proteoglycan fibril organization and corneal transparency. May play a role in the maintenance of tissue architecture by suppressing cellular motility and invasion. The polypeptide is UDP-GlcNAc:betaGal beta-1,3-N-acetylglucosaminyltransferase 7 (B3gnt7) (Mus musculus (Mouse)).